Reading from the N-terminus, the 64-residue chain is Metallothionein-like protein 1 (64 aa).

This sequence belongs to the metallothionein superfamily. Type 15 family.

Its function is as follows. Metallothioneins have a high content of cysteine residues that bind various heavy metals. In Prunus avium (Cherry), this protein is Metallothionein-like protein 1 (MT1).